The following is a 611-amino-acid chain: Chaperone protein DnaK (611 aa).

Thr173 is subject to Phosphothreonine; by autocatalysis. Residues 579–592 (AAGQAEGAQGAQDA) show a composition bias toward low complexity. Positions 579 to 598 (AAGQAEGAQGAQDAGAKKDN) are disordered.

It belongs to the heat shock protein 70 family.

Acts as a chaperone. This is Chaperone protein DnaK from Bacillus cereus (strain AH187).